The primary structure comprises 143 residues: Holo-[acyl-carrier-protein] synthase (143 aa).

Mg(2+) is bound by residues D9 and E63.

This sequence belongs to the P-Pant transferase superfamily. AcpS family. Requires Mg(2+) as cofactor.

It localises to the cytoplasm. It carries out the reaction apo-[ACP] + CoA = holo-[ACP] + adenosine 3',5'-bisphosphate + H(+). Transfers the 4'-phosphopantetheine moiety from coenzyme A to a Ser of acyl-carrier-protein. This is Holo-[acyl-carrier-protein] synthase from Burkholderia pseudomallei (strain 1106a).